Reading from the N-terminus, the 194-residue chain is Kallikrein-like enzyme LV-Ka (194 aa).

Intrachain disulfides connect cysteine 7–cysteine 99, cysteine 44–cysteine 192, cysteine 78–cysteine 146, cysteine 110–cysteine 125, and cysteine 136–cysteine 161. A Peptidase S1 domain is found at 36–185; it reads LNQEDKFICP…YTEWIQSIIA (150 aa). Serine 140 serves as the catalytic Charge relay system.

The protein belongs to the peptidase S1 family. Snake venom subfamily. Monomer. Post-translationally, N-glycosylated. Expressed by the venom gland.

Its subcellular location is the secreted. Completely inhibited by the serine protease inhibitors NPGB and PMSF, partially inhibited by benzamidines, and weakly or not inhibited by SBTI and EDTA. Its function is as follows. Shows kallikrein-like activity, releasing bradykinin from kininogen. Also activates plasminogen, which is also a plasma kallikrein activity. Is active upon the kallikrein substrates S-2266 and S-2302, suggesting a preference for Arg in P1 position. In vivo, lowers blood pressure after intravenous injection in rat. This is Kallikrein-like enzyme LV-Ka from Lachesis muta muta (Bushmaster).